A 463-amino-acid chain; its full sequence is Glutamate--tRNA ligase (463 aa).

A 'HIGH' region motif is present at residues 9 to 19; that stretch reads PSPTGYLHVGG. A compositionally biased stretch (basic and acidic residues) spans 115–129; sequence AGEKPRYDGTWRPEA. A disordered region spans residues 115–136; it reads AGEKPRYDGTWRPEAGKTLPAI. Residues 241 to 245 carry the 'KMSKS' region motif; the sequence is KLSKR. Lys244 serves as a coordination point for ATP.

Belongs to the class-I aminoacyl-tRNA synthetase family. Glutamate--tRNA ligase type 1 subfamily. As to quaternary structure, monomer.

Its subcellular location is the cytoplasm. It carries out the reaction tRNA(Glu) + L-glutamate + ATP = L-glutamyl-tRNA(Glu) + AMP + diphosphate. In terms of biological role, catalyzes the attachment of glutamate to tRNA(Glu) in a two-step reaction: glutamate is first activated by ATP to form Glu-AMP and then transferred to the acceptor end of tRNA(Glu). This Janthinobacterium sp. (strain Marseille) (Minibacterium massiliensis) protein is Glutamate--tRNA ligase.